The following is a 354-amino-acid chain: MIRDENKQKALAAALAQIEKQFGKGSIMRLGEDRSMDVETISTGSLSLDIALGAGGLPMGRIVEIYGPESSGKTTLTLQVIAAAQREGKVCAFIDAEHALDPVYAKKLGVDIDNLLCSQPDTGEQALEICDSLTRSGAVDVIIVDSVAALVPKAEIEGEIGDSHMGLAARMMSQAMRKLAGNLKNANTLLIFINQIRMKIGVMFGNPETTTGGNALKFYASVRLDIRRVGAIKEGEMVIGNDTRVKVVKNKIAAPFKQADFQILYGEGINTHGELIDLGVKHQLVEKAGSWYSYNGTKIGQGKSNVTEYLKTNPSIAAELDKILRNRLLNPVCEKDKTDLDPLDKIYHENSTAF.

Glycine 67–threonine 74 contacts ATP.

This sequence belongs to the RecA family.

Its subcellular location is the cytoplasm. In terms of biological role, can catalyze the hydrolysis of ATP in the presence of single-stranded DNA, the ATP-dependent uptake of single-stranded DNA by duplex DNA, and the ATP-dependent hybridization of homologous single-stranded DNAs. It interacts with LexA causing its activation and leading to its autocatalytic cleavage. The polypeptide is Protein RecA (Hamiltonella defensa subsp. Acyrthosiphon pisum (strain 5AT)).